The chain runs to 261 residues: 3-deoxy-manno-octulosonate cytidylyltransferase (261 aa).

The protein belongs to the KdsB family.

It localises to the cytoplasm. The enzyme catalyses 3-deoxy-alpha-D-manno-oct-2-ulosonate + CTP = CMP-3-deoxy-beta-D-manno-octulosonate + diphosphate. Its pathway is nucleotide-sugar biosynthesis; CMP-3-deoxy-D-manno-octulosonate biosynthesis; CMP-3-deoxy-D-manno-octulosonate from 3-deoxy-D-manno-octulosonate and CTP: step 1/1. It participates in bacterial outer membrane biogenesis; lipopolysaccharide biosynthesis. In terms of biological role, activates KDO (a required 8-carbon sugar) for incorporation into bacterial lipopolysaccharide in Gram-negative bacteria. This is 3-deoxy-manno-octulosonate cytidylyltransferase from Dechloromonas aromatica (strain RCB).